Reading from the N-terminus, the 173-residue chain is Large ribosomal subunit protein uL10 (173 aa).

It belongs to the universal ribosomal protein uL10 family. In terms of assembly, part of the ribosomal stalk of the 50S ribosomal subunit. The N-terminus interacts with L11 and the large rRNA to form the base of the stalk. The C-terminus forms an elongated spine to which L12 dimers bind in a sequential fashion forming a multimeric L10(L12)X complex.

In terms of biological role, forms part of the ribosomal stalk, playing a central role in the interaction of the ribosome with GTP-bound translation factors. The polypeptide is Large ribosomal subunit protein uL10 (Cupriavidus metallidurans (strain ATCC 43123 / DSM 2839 / NBRC 102507 / CH34) (Ralstonia metallidurans)).